The following is a 193-amino-acid chain: Putative histone H2B type 2-C (193 aa).

Over residues 1-12 (MPEPAKFAPAPK) the composition is skewed to low complexity. The disordered stretch occupies residues 1 to 33 (MPEPAKFAPAPKKGSKKAVTKAQKKDGKKRKRS). An N-acetylproline modification is found at Pro-2. An N6-(2-hydroxyisobutyryl)lysine; alternate modification is found at Lys-6. Residues Lys-6 and Lys-12 each carry the N6-(beta-hydroxybutyryl)lysine; alternate modification. N6-acetyllysine; alternate occurs at positions 6, 12, and 13. Lys-6 bears the N6-butyryllysine; alternate mark. Lys-6, Lys-12, and Lys-13 each carry N6-crotonyllysine; alternate. An N6-lactoyllysine; alternate mark is found at Lys-6 and Lys-12. Residue Lys-6 forms a Glycyl lysine isopeptide (Lys-Gly) (interchain with G-Cter in SUMO2); alternate linkage. Lys-13 is subject to N6-(2-hydroxyisobutyryl)lysine; alternate. Ser-15 carries the phosphoserine; by STK4/MST1 modification. N6-acetyllysine; alternate is present on residues Lys-16, Lys-17, Lys-21, and Lys-24. Residues Lys-16, Lys-17, Lys-21, and Lys-24 each carry the N6-crotonyllysine; alternate modification. Residues Lys-16, Lys-17, Lys-21, and Lys-24 each carry the N6-lactoyllysine; alternate modification. Lys-17 and Lys-21 each carry N6-(beta-hydroxybutyryl)lysine; alternate. Position 17 is an N6-glutaryllysine; alternate (Lys-17). N6-(2-hydroxyisobutyryl)lysine; alternate is present on residues Lys-21 and Lys-24. Lys-21 is modified (N6-butyryllysine; alternate). Residue Lys-21 forms a Glycyl lysine isopeptide (Lys-Gly) (interchain with G-Cter in SUMO2); alternate linkage. Lys-25 bears the N6-(2-hydroxyisobutyryl)lysine mark. At Lys-35 the chain carries N6-(2-hydroxyisobutyryl)lysine; alternate. Residue Lys-35 is modified to N6-(beta-hydroxybutyryl)lysine; alternate. The residue at position 35 (Lys-35) is an N6-crotonyllysine; alternate. Lys-35 carries the post-translational modification N6-glutaryllysine; alternate. An N6-succinyllysine; alternate modification is found at Lys-35. Residue Lys-35 forms a Glycyl lysine isopeptide (Lys-Gly) (interchain with G-Cter in ubiquitin); alternate linkage. Position 37 is a phosphoserine; by AMPK (Ser-37). N6-(2-hydroxyisobutyryl)lysine; alternate occurs at positions 44, 47, and 58. At Lys-44 the chain carries N6-lactoyllysine; alternate. An N6-glutaryllysine; alternate mark is found at Lys-44 and Lys-47. Lys-47 is subject to N6-methyllysine; alternate. N6,N6-dimethyllysine; alternate is present on Lys-58. Arg-80 carries the post-translational modification Dimethylated arginine. Lys-86 is modified (N6-(2-hydroxyisobutyryl)lysine; alternate). N6-(beta-hydroxybutyryl)lysine; alternate is present on Lys-86. Lys-86 carries the N6-acetyllysine; alternate modification. Lys-86 is modified (N6-lactoyllysine; alternate). Position 86 is an N6,N6,N6-trimethyllysine; alternate (Lys-86). Arg-87 and Arg-93 each carry omega-N-methylarginine. The tract at residues 111 to 136 (PCPRAPRRSPSTPAPSESLPGPGARS) is disordered.

Belongs to the histone H2B family. The nucleosome is a histone octamer containing two molecules each of H2A, H2B, H3 and H4 assembled in one H3-H4 heterotetramer and two H2A-H2B heterodimers. The octamer wraps approximately 147 bp of DNA. In terms of processing, phosphorylation at Ser-37 (H2BS36ph) by AMPK in response to stress promotes transcription. Phosphorylated on Ser-15 (H2BS14ph) by STK4/MST1 during apoptosis; which facilitates apoptotic chromatin condensation. Also phosphorylated on Ser-15 in response to DNA double strand breaks (DSBs), and in correlation with somatic hypermutation and immunoglobulin class-switch recombination. Crotonylation (Kcr) is specifically present in male germ cells and marks testis-specific genes in post-meiotic cells, including X-linked genes that escape sex chromosome inactivation in haploid cells. Crotonylation marks active promoters and enhancers and confers resistance to transcriptional repressors. It is also associated with post-meiotically activated genes on autosomes. Post-translationally, lactylated in macrophages by EP300/P300 by using lactoyl-CoA directly derived from endogenous or exogenous lactate, leading to stimulates gene transcription.

The protein localises to the nucleus. It is found in the chromosome. In terms of biological role, core component of nucleosome. Nucleosomes wrap and compact DNA into chromatin, limiting DNA accessibility to the cellular machineries which require DNA as a template. Histones thereby play a central role in transcription regulation, DNA repair, DNA replication and chromosomal stability. DNA accessibility is regulated via a complex set of post-translational modifications of histones, also called histone code, and nucleosome remodeling. This is Putative histone H2B type 2-C from Homo sapiens (Human).